A 181-amino-acid polypeptide reads, in one-letter code: uncharacterized protein (181 aa).

This is an uncharacterized protein from Homo sapiens (Human).